We begin with the raw amino-acid sequence, 140 residues long: Large ribosomal subunit protein uL15 (140 aa).

Residues 1–31 (MDTKKFRGSRTCGGGTHKNRRGAGNRGGRGK) are disordered.

This sequence belongs to the universal ribosomal protein uL15 family. In terms of assembly, part of the 50S ribosomal subunit.

Its function is as follows. Binds to the 23S rRNA. The polypeptide is Large ribosomal subunit protein uL15 (Methanosarcina barkeri (strain Fusaro / DSM 804)).